We begin with the raw amino-acid sequence, 91 residues long: Large ribosomal subunit protein uL22 (91 aa).

This sequence belongs to the universal ribosomal protein uL22 family. Part of the 50S ribosomal subunit.

Its function is as follows. This protein binds specifically to 23S rRNA; its binding is stimulated by other ribosomal proteins, e.g. L4, L17, and L20. It is important during the early stages of 50S assembly. It makes multiple contacts with different domains of the 23S rRNA in the assembled 50S subunit and ribosome. The globular domain of the protein is located near the polypeptide exit tunnel on the outside of the subunit, while an extended beta-hairpin is found that lines the wall of the exit tunnel in the center of the 70S ribosome. In Clover yellow edge phytoplasma, this protein is Large ribosomal subunit protein uL22 (rplV).